The chain runs to 1349 residues: Patatin-like phospholipase domain-containing protein 7 (1349 aa).

Residues 1–36 (MQKEEDVCPEAGYCLGTALSSWGLHFMEEHSQSTML) are Lumenal-facing. The chain crosses the membrane as a helical span at residues 37 to 57 (MGIGIGVLLTLAFVGLAAFFV). Over 58–1349 (YRKVSRFRRA…DQGPRLYRPS (1292 aa)) the chain is Cytoplasmic. 170–297 (VLGHFEKPLF…VRVVQIIMVR (128 aa)) contributes to the a nucleoside 3',5'-cyclic phosphate binding site. The segment at 340-361 (MSYGPEEQLERSPRLSEFNSSD) is disordered. A phosphoserine mark is found at serine 341 and serine 377. Residues 496–599 (FLHV…VVRR) and 610–715 (ALDW…LGEK) contribute to the a nucleoside 3',5'-cyclic phosphate site. The interval 678–964 (VHAVRDSELA…RGCAQVGILR (287 aa)) is involved in the binding to lipid droplets. A PNPLA domain is found at 947–1113 (LVLGGGGARG…INNLPADVAR (167 aa)). A GXGXXG motif is present at residues 951-956 (GGGARG). The GXSXG motif lies at 978–982 (GTSIG). The active-site Nucleophile is the serine 980. The active-site Proton acceptor is aspartate 1100. The short motif at 1100-1102 (DGG) is the DGA/G element. Serine 1277 carries the phosphoserine modification. Residue threonine 1281 is modified to Phosphothreonine. Residues 1297 to 1349 (DFQSTGIELDSDSECEPSMSQGPHSLTSPKQSQDSFPWLPNQDDQGPRLYRPS) form a disordered region. Residues 1314-1331 (SMSQGPHSLTSPKQSQDS) are compositionally biased toward polar residues.

This sequence belongs to the NTE family. As to expression, expressed in the brain, liver, kidney, lung and testis.

It localises to the endoplasmic reticulum membrane. The protein localises to the lipid droplet. It carries out the reaction a 1-acyl-sn-glycero-3-phosphocholine + H2O = sn-glycerol 3-phosphocholine + a fatty acid + H(+). It catalyses the reaction 1-(9Z-octadecenoyl)-sn-glycero-3-phosphocholine + H2O = sn-glycerol 3-phosphocholine + (9Z)-octadecenoate + H(+). The catalysed reaction is 1-(9Z-octadecenoyl)-sn-glycero-3-phosphoethanolamine + H2O = sn-glycero-3-phosphoethanolamine + (9Z)-octadecenoate + H(+). The enzyme catalyses 1-(9Z-octadecenoyl)-sn-glycero-3-phospho-L-serine + H2O = sn-glycero-3-phospho-L-serine + (9Z)-octadecenoate + H(+). It carries out the reaction 1-hexadecanoyl-sn-glycero-3-phosphocholine + H2O = sn-glycerol 3-phosphocholine + hexadecanoate + H(+). It catalyses the reaction 1-hexadecanoyl-sn-glycero-3-phosphate + H2O = sn-glycerol 3-phosphate + hexadecanoate + H(+). Functionally, lysophospholipase which preferentially deacylates unsaturated lysophosphatidylcholine (C18:1), generating glycerophosphocholine. Also can deacylate, to a lesser extent, lysophosphatidylethanolamine (C18:1), lysophosphatidyl-L-serine (C18:1) and lysophosphatidic acid (C16:0). This Rattus norvegicus (Rat) protein is Patatin-like phospholipase domain-containing protein 7 (Pnpla7).